Consider the following 829-residue polypeptide: FAST kinase domain-containing protein 1, mitochondrial (829 aa).

Lys-346 is modified (N6-acetyllysine). Positions 761 to 821 constitute an RAP domain; that stretch reads IAIELLDVRA…KDARMDYLRE (61 aa).

The protein belongs to the FAST kinase family. In terms of tissue distribution, expression detected in spleen, testis, colon, heart, smooth muscle, kidney, brain, lung, liver, brown and white adipose tissue with highest expression in heart and brown adipose tissue.

The protein localises to the mitochondrion. Involved in the down-regulation of mitochondrial MT-ND3 mRNA levels which leads to decreased respiratory complex I abundance and activity. This is FAST kinase domain-containing protein 1, mitochondrial (Fastkd1) from Mus musculus (Mouse).